The chain runs to 290 residues: uncharacterized protein (290 aa).

The segment at 153–178 is disordered; the sequence is EMVPITTSSTTPRSKGDEATSTGAFP. The segment covering 157–178 has biased composition (polar residues); it reads ITTSSTTPRSKGDEATSTGAFP. The helical transmembrane segment at 202 to 222 threads the bilayer; that stretch reads LIAVTLLLGGAAIIVFVIFEV. The segment at 246 to 276 is disordered; the sequence is KEEDQKPGTTESQLDSQPEKVKHNVPNSSDS. The segment covering 252-261 has biased composition (polar residues); the sequence is PGTTESQLDS.

The protein localises to the membrane. This is an uncharacterized protein from Mus musculus (Mouse).